The chain runs to 365 residues: Methylthioribose-1-phosphate isomerase (365 aa).

Residues 53–55 (RGA), Arg90, and Gln201 each bind substrate. Asp242 acts as the Proton donor in catalysis. Position 252-253 (252-253 (NK)) interacts with substrate.

It belongs to the eIF-2B alpha/beta/delta subunits family. MtnA subfamily.

It carries out the reaction 5-(methylsulfanyl)-alpha-D-ribose 1-phosphate = 5-(methylsulfanyl)-D-ribulose 1-phosphate. It functions in the pathway amino-acid biosynthesis; L-methionine biosynthesis via salvage pathway; L-methionine from S-methyl-5-thio-alpha-D-ribose 1-phosphate: step 1/6. Catalyzes the interconversion of methylthioribose-1-phosphate (MTR-1-P) into methylthioribulose-1-phosphate (MTRu-1-P). In Methylorubrum populi (strain ATCC BAA-705 / NCIMB 13946 / BJ001) (Methylobacterium populi), this protein is Methylthioribose-1-phosphate isomerase.